The primary structure comprises 341 residues: Foldase protein PrsA (341 aa).

The first 22 residues, 1–22 (MKNIGRLAVTALIAVFIFSVTG), serve as a signal peptide directing secretion. Residue Cys23 is the site of N-palmitoyl cysteine attachment. A lipid anchor (S-diacylglycerol cysteine) is attached at Cys23. A PpiC domain is found at 199 to 291 (PNKMHLAHIL…FGYHIIKCIK (93 aa)).

The protein belongs to the PrsA family.

The protein resides in the cell membrane. The enzyme catalyses [protein]-peptidylproline (omega=180) = [protein]-peptidylproline (omega=0). In terms of biological role, plays a major role in protein secretion by helping the post-translocational extracellular folding of several secreted proteins. The chain is Foldase protein PrsA from Clostridium kluyveri (strain NBRC 12016).